Consider the following 256-residue polypeptide: Small ribosomal subunit protein eS1 (256 aa).

Ala2 bears the N-acetylalanine; partial mark.

This sequence belongs to the eukaryotic ribosomal protein eS1 family. In terms of assembly, component of the small ribosomal subunit. Mature ribosomes consist of a small (40S) and a large (60S) subunit. The 40S subunit contains about 33 different proteins and 1 molecule of RNA (18S). The 60S subunit contains about 49 different proteins and 3 molecules of RNA (25S, 5.8S and 5S).

The protein localises to the cytoplasm. In Candida tropicalis (strain ATCC MYA-3404 / T1) (Yeast), this protein is Small ribosomal subunit protein eS1.